We begin with the raw amino-acid sequence, 378 residues long: Fructose-1,6-bisphosphatase class 1 2 (378 aa).

The Mg(2+) site is built by E98, D120, L122, and D123. Substrate-binding positions include 123–126 and N227; that span reads DGSS. E299 contributes to the Mg(2+) binding site.

Belongs to the FBPase class 1 family. Homotetramer. It depends on Mg(2+) as a cofactor.

Its subcellular location is the cytoplasm. The catalysed reaction is beta-D-fructose 1,6-bisphosphate + H2O = beta-D-fructose 6-phosphate + phosphate. The protein operates within carbohydrate biosynthesis; gluconeogenesis. The sequence is that of Fructose-1,6-bisphosphatase class 1 2 from Paraburkholderia xenovorans (strain LB400).